The primary structure comprises 269 residues: Phosphonoacetaldehyde hydrolase (269 aa).

Asp10 acts as the Nucleophile in catalysis. Asp10 and Ala12 together coordinate Mg(2+). Lys52 serves as the catalytic Schiff-base intermediate with substrate. Asp186 is a binding site for Mg(2+).

The protein belongs to the HAD-like hydrolase superfamily. PhnX family. In terms of assembly, homodimer. Mg(2+) is required as a cofactor.

It catalyses the reaction phosphonoacetaldehyde + H2O = acetaldehyde + phosphate + H(+). In terms of biological role, involved in phosphonate degradation. The chain is Phosphonoacetaldehyde hydrolase from Klebsiella pneumoniae subsp. pneumoniae (strain ATCC 700721 / MGH 78578).